Consider the following 508-residue polypeptide: Protein DETOXIFICATION 52 (508 aa).

12 helical membrane-spanning segments follow: residues 48–68 (ILAA…LGHI), 78–98 (LAIA…ALGM), 122–142 (VLFL…LGKI), 156–176 (AQTY…LHPL), 189–209 (LTLA…FLVS), 222–242 (AAAS…IAGL), 270–290 (IGVC…GLLI), 300–320 (GILI…GLAV), 341–361 (IVAV…AWGV), 368–388 (IFTN…ILGL), 415–437 (INLG…WAAY), and 441–463 (GLWV…VVAT).

This sequence belongs to the multi antimicrobial extrusion (MATE) (TC 2.A.66.1) family. Detected in the part of the veins in cotyledons of 6-day-old seedlings and the basal parts of the petioles in older plants. Highly expressed in the vascular tissues of hypocotyl in dark-grown seedlings.

It localises to the late endosome membrane. Its function is as follows. May act as a negative regulator of hypocotyl cell elongation in the light. The protein is Protein DETOXIFICATION 52 of Arabidopsis thaliana (Mouse-ear cress).